Reading from the N-terminus, the 85-residue chain is Protein WIR1B (85 aa).

At 1 to 12 the chain is on the cytoplasmic side; the sequence is MASHSAAGRRPT. A helical membrane pass occupies residues 13-34; the sequence is ALVHIALFVAIAAVIINSSVCL. Over 35–85 the chain is Extracellular; that stretch reads GAAVHDAATSGTGALDPNVPAVPTPGGAGQPYTGRGCRTVYGCKPPAGSQP.

The protein localises to the membrane. Its function is as follows. Associated with pathogen defense. This chain is Protein WIR1B (WIR1B), found in Triticum aestivum (Wheat).